Here is a 107-residue protein sequence, read N- to C-terminus: Iron-sulfur cluster assembly protein CyaY (107 aa).

The protein belongs to the frataxin family.

Functionally, involved in iron-sulfur (Fe-S) cluster assembly. May act as a regulator of Fe-S biogenesis. This Thioalkalivibrio sulfidiphilus (strain HL-EbGR7) protein is Iron-sulfur cluster assembly protein CyaY.